A 124-amino-acid chain; its full sequence is MFAVIKANGKQYRVAAADEITIDHLDAEVGSVFTFPVLMLGGATVAIGAPHVDGATVTGEVVEQTRGDKVIAFKKRRRQNSRRKRGFRADLTVVRITEISGLGETVKAEPKSKRAPAPEAAADA.

The tract at residues 105–124 (TVKAEPKSKRAPAPEAAADA) is disordered. A compositionally biased stretch (low complexity) spans 115–124 (APAPEAAADA).

It belongs to the bacterial ribosomal protein bL21 family. As to quaternary structure, part of the 50S ribosomal subunit. Contacts protein L20.

In terms of biological role, this protein binds to 23S rRNA in the presence of protein L20. This Xanthobacter autotrophicus (strain ATCC BAA-1158 / Py2) protein is Large ribosomal subunit protein bL21.